Reading from the N-terminus, the 162-residue chain is ATP synthase subunit b (162 aa).

The chain crosses the membrane as a helical span at residues 4-24 (INWGSIIYQLIAFCVLLWLLS).

It belongs to the ATPase B chain family. F-type ATPases have 2 components, F(1) - the catalytic core - and F(0) - the membrane proton channel. F(1) has five subunits: alpha(3), beta(3), gamma(1), delta(1), epsilon(1). F(0) has three main subunits: a(1), b(2) and c(10-14). The alpha and beta chains form an alternating ring which encloses part of the gamma chain. F(1) is attached to F(0) by a central stalk formed by the gamma and epsilon chains, while a peripheral stalk is formed by the delta and b chains.

It localises to the cell membrane. F(1)F(0) ATP synthase produces ATP from ADP in the presence of a proton or sodium gradient. F-type ATPases consist of two structural domains, F(1) containing the extramembraneous catalytic core and F(0) containing the membrane proton channel, linked together by a central stalk and a peripheral stalk. During catalysis, ATP synthesis in the catalytic domain of F(1) is coupled via a rotary mechanism of the central stalk subunits to proton translocation. In terms of biological role, component of the F(0) channel, it forms part of the peripheral stalk, linking F(1) to F(0). This is ATP synthase subunit b from Halalkalibacterium halodurans (strain ATCC BAA-125 / DSM 18197 / FERM 7344 / JCM 9153 / C-125) (Bacillus halodurans).